Here is a 280-residue protein sequence, read N- to C-terminus: Uroporphyrinogen-III C-methyltransferase (280 aa).

Residues P24, 100-102 (GGD), 130-131 (TA), M184, A213, and A241 each bind S-adenosyl-L-homocysteine.

Belongs to the precorrin methyltransferase family. As to quaternary structure, homodimer.

The catalysed reaction is uroporphyrinogen III + 2 S-adenosyl-L-methionine = precorrin-2 + 2 S-adenosyl-L-homocysteine + H(+). It carries out the reaction uroporphyrinogen III + S-adenosyl-L-methionine = precorrin-1 + S-adenosyl-L-homocysteine + H(+). The enzyme catalyses precorrin-1 + S-adenosyl-L-methionine = precorrin-2 + S-adenosyl-L-homocysteine. Its pathway is cofactor biosynthesis; adenosylcobalamin biosynthesis; precorrin-2 from uroporphyrinogen III: step 1/1. It participates in porphyrin-containing compound metabolism; siroheme biosynthesis; precorrin-2 from uroporphyrinogen III: step 1/1. Its activity is regulated as follows. S-adenosylhomocysteine is an extremely powerful competitive inhibitor of the uroporphyrinogen III methylation. SUMT exhibits a substrate inhibition phenomenon at uroporphyrinogen III concentrations above 2 uM; this property might play a regulatory role in cobalamin biosynthesis. The enzyme activity is completely insensitive to feedback inhibition by cobalamin and corrinoid intermediates. Its function is as follows. Catalyzes the two successive C-2 and C-7 methylation reactions involved in the conversion of uroporphyrinogen III to precorrin-2 via the intermediate formation of precorrin-1. It is a step in the biosynthesis of both cobalamin (vitamin B12) and siroheme. Neither uroporphyrin III nor the chlorin (factor I) is a substrate of SUMT. In Sinorhizobium sp, this protein is Uroporphyrinogen-III C-methyltransferase.